Consider the following 405-residue polypeptide: Alpha-N-acetylgalactosaminidase (405 aa).

3 cysteine pairs are disulfide-bonded: C21/C63, C25/C32, and C111/C142. Residues D61–D62 and K138 each bind substrate. The active-site Nucleophile is the D140. An N-linked (GlcNAc...) asparagine glycan is attached at N161. An intrachain disulfide couples C171 to C193. Substrate is bound at residue S172. The N-linked (GlcNAc...) asparagine glycan is linked to N185. The substrate site is built by R197 and D201. Catalysis depends on D201, which acts as the Proton donor. An N-linked (GlcNAc...) asparagine glycan is attached at N369.

It belongs to the glycosyl hydrolase 27 family. In terms of assembly, homodimer.

The protein resides in the lysosome. It carries out the reaction Cleavage of non-reducing alpha-(1-&gt;3)-N-acetylgalactosamine residues from human blood group A and AB mucin glycoproteins, Forssman hapten and blood group A lacto series glycolipids.. It catalyses the reaction a neolactoside IV(3)-alpha-GalNAc,IV(2)-alpha-Fuc-nLc4Cer(d18:1(4E)) + H2O = a neolactoside IV(2)-alpha-Fuc-nLc4Cer(d18:1(4E)) + N-acetyl-alpha-D-galactosamine. The catalysed reaction is a neolactoside IV(3)-alpha-GalNAc,IV(2)-alpha-Fuc-nLc4Cer(d18:0) + H2O = a neolactoside IV(2)-alpha-Fuc-nLc4Cer(d18:0) + N-acetyl-alpha-D-galactosamine. The enzyme catalyses a globoside IV3GalNAc-Gb4Cer + H2O = N-acetyl-alpha-D-galactosamine + a globoside Gb4Cer. Functionally, removes terminal alpha-N-acetylgalactosamine residues from glycolipids and glycopeptides. Required for the breakdown of glycolipids. The sequence is that of Alpha-N-acetylgalactosaminidase (NAGA) from Gallus gallus (Chicken).